An 86-amino-acid chain; its full sequence is MERKQRKVYQGRVVSDKMDKTITVVVETKRNHPVYGKRINYSKKYKAHDENNSAKTGDIVRIMETRPLSKDKHFRLVEIVEEAVII.

The protein belongs to the universal ribosomal protein uS17 family. As to quaternary structure, part of the 30S ribosomal subunit.

Functionally, one of the primary rRNA binding proteins, it binds specifically to the 5'-end of 16S ribosomal RNA. This Lactococcus lactis subsp. cremoris (strain MG1363) protein is Small ribosomal subunit protein uS17.